Here is an 823-residue protein sequence, read N- to C-terminus: Hypoxia-inducible factor 1-alpha (823 aa).

The segment at 1–30 (MEGAGGANDKKKISSERRKEKSRDAARSRR) is disordered. The interval 1-401 (MEGAGGANDK…KEPDALTLLA (401 aa)) is interaction with TSGA10. Basic and acidic residues predominate over residues 8–30 (NDKKKISSERRKEKSRDAARSRR). The bHLH domain occupies 17–70 (RRKEKSRDAARSRRSKESEVFYELAHQLPLPHNVSSHLDKASVMRLTISYLRVR). The segment at 21-30 (KSRDAARSRR) is DNA-binding. Positions 85–158 (KAQMNCFYLK…THRNGLVKKG (74 aa)) constitute a PAS 1 domain. Positions 170–191 (RMKCTLTSRGRTMNIKSATWKV) are required for heterodimer formation with ARNT. Positions 228–298 (PHPSNIEIPL…KTHHDMFTKG (71 aa)) constitute a PAS 2 domain. Residue serine 247 is modified to Phosphoserine; by CK1. The 44-residue stretch at 302-345 (TGQYRMLAKRGGYVWIETQATVIYNTKNSQPQCIVCVNYVVSGI) folds into the PAC domain. Residues 401 to 600 (APAAGDTIIS…QSASTNTVFQ (200 aa)) are ODD. Proline 402 carries the 4-hydroxyproline modification. A compositionally biased stretch (polar residues) spans 494-517 (IQDQPASPSDGSTRQSSPEPNSPS). A disordered region spans residues 494–521 (IQDQPASPSDGSTRQSSPEPNSPSEYCF). An NTAD region spans residues 531 to 575 (FKLELVEKLFAEDTEAKNPFSTQDTDLDLEMLAPYIPMDDDFQLR). Lysine 532 carries the post-translational modification N6-acetyllysine; alternate. Lysine 532 participates in a covalent cross-link: Glycyl lysine isopeptide (Lys-Gly) (interchain with G-Cter in ubiquitin); alternate. Residues lysine 538 and lysine 547 each participate in a glycyl lysine isopeptide (Lys-Gly) (interchain with G-Cter in ubiquitin) cross-link. Serine 551 carries the phosphoserine; by GSK3-beta modification. Residue threonine 555 is modified to Phosphothreonine; by GSK3-beta. Proline 564 carries the 4-hydroxyproline modification. Phosphoserine; by PLK3 is present on serine 576. Residues 576–782 (SFDQLSPLEN…SDLACRLLGQ (207 aa)) are ID. Disordered stretches follow at residues 581–602 (SPLE…FQPT) and 639–685 (PSPP…PRSP). A Phosphoserine; by GSK3-beta modification is found at serine 589. Over residues 651–666 (ATTSPYSDTGSRTASP) the composition is skewed to polar residues. Residue serine 654 is modified to Phosphoserine; by PLK3. Lysine 706 carries the post-translational modification N6-acetyllysine. A Nuclear localization signal motif is present at residues 715-721 (RKRKIEH). A CTAD region spans residues 783 to 823 (SMDESGLPQLTSYDCEVNAPIQGSRNLLQGEELLRALDQVN). At cysteine 797 the chain carries S-nitrosocysteine. The residue at position 800 (asparagine 800) is a (3S)-3-hydroxyasparagine.

As to quaternary structure, interacts with the ARNT; forms a heterodimer that binds core DNA sequence 5'-TACGTG-3' within the hypoxia response element (HRE) of target gene promoters. Interacts with COPS5; the interaction increases the transcriptional activity of HIF1A through increased stability. Interacts with EP300 (via TAZ-type 1 domains); the interaction is stimulated in response to hypoxia and inhibited by CITED2. Interacts with CREBBP (via TAZ-type 1 domains). Interacts with NCOA1, NCOA2, APEX1 and HSP90. Interacts (hydroxylated within the ODD domain) with VHLL (via beta domain); the interaction, leads to polyubiquitination and subsequent HIF1A proteasomal degradation. During hypoxia, sumoylated HIF1A also binds VHL; the interaction promotes the ubiquitination of HIF1A. Interacts with SENP1; the interaction desumoylates HIF1A resulting in stabilization and activation of transcription. Interacts (via the ODD domain) with NAA10; the interaction appears not to acetylate HIF1A nor have any affect on protein stability, during hypoxia. Interacts with RWDD3; the interaction enhances HIF1A sumoylation. Interacts with TSGA10. Interacts with HIF3A. Interacts with RORA (via the DNA binding domain); the interaction enhances HIF1A transcription under hypoxia through increasing protein stability. Interaction with PSMA7 inhibits the transactivation activity of HIF1A under both normoxic and hypoxia-mimicking conditions. Interacts with USP20. Interacts with RACK1; promotes HIF1A ubiquitination and proteasome-mediated degradation. Interacts (via N-terminus) with USP19. Interacts with SIRT2. Interacts (deacetylated form) with EGLN1. Interacts with CBFA2T3. Interacts with HSP90AA1 and HSP90AB1. Interacts with DCUN1D1; this interaction increases the interaction between VHL and DCUN1D1. Interacts with HIF1AN. Post-translationally, S-nitrosylation of Cys-797 may be responsible for increased recruitment of p300 coactivator necessary for transcriptional activity of HIF-1 complex. In terms of processing, acetylation of Lys-532 by ARD1 increases interaction with VHL and stimulates subsequent proteasomal degradation. Deacetylation of Lys-706 by SIRT2 increases its interaction with and hydroxylation by EGLN1 thereby inactivating HIF1A activity by inducing its proteasomal degradation. Ubiquitinated; in normoxia, following hydroxylation and interaction with VHL. Lys-532 appears to be the principal site of ubiquitination. Clioquinol, the Cu/Zn-chelator, inhibits ubiquitination through preventing hydroxylation at Asn-800. Ubiquitinated by E3 ligase VHL. Deubiquitinated by UCHL1. Post-translationally, requires phosphorylation for DNA-binding. Phosphorylation at Ser-247 by CSNK1D/CK1 represses kinase activity and impairs ARNT binding. Phosphorylation by GSK3-beta and PLK3 promote degradation by the proteasome. In terms of processing, the iron and 2-oxoglutarate dependent 3-hydroxylation of asparagine is (S) stereospecific within HIF CTAD domains. Sumoylated; with SUMO1 under hypoxia. Sumoylation is enhanced through interaction with RWDD3. Both sumoylation and desumoylation seem to be involved in the regulation of its stability during hypoxia. Sumoylation can promote either its stabilization or its VHL-dependent degradation by promoting hydroxyproline-independent HIF1A-VHL complex binding, thus leading to HIF1A ubiquitination and proteasomal degradation. Desumoylation by SENP1 increases its stability amd transcriptional activity. There is a disaccord between various publications on the effect of sumoylation and desumoylation on its stability and transcriptional activity. Post-translationally, in normoxia, is hydroxylated on Pro-402 and Pro-564 in the oxygen-dependent degradation domain (ODD) by EGLN1/PHD2 and EGLN2/PHD1. EGLN3/PHD3 has also been shown to hydroxylate Pro-564. The hydroxylated prolines promote interaction with VHL, initiating rapid ubiquitination and subsequent proteasomal degradation. Deubiquitinated by USP20. Under hypoxia, proline hydroxylation is impaired and ubiquitination is attenuated, resulting in stabilization. In normoxia, is hydroxylated on Asn-800 by HIF1AN, thus abrogating interaction with CREBBP and EP300 and preventing transcriptional activation. Repressed by iron ion, via Fe(2+) prolyl hydroxylase (PHD) enzymes-mediated hydroxylation and subsequent proteasomal degradation.

The protein localises to the cytoplasm. It localises to the nucleus. With respect to regulation, induced by reactive oxygen species (ROS). Functions as a master transcriptional regulator of the adaptive response to hypoxia. Under hypoxic conditions, activates the transcription of over 40 genes, including erythropoietin, glucose transporters, glycolytic enzymes, vascular endothelial growth factor, HILPDA, and other genes whose protein products increase oxygen delivery or facilitate metabolic adaptation to hypoxia. Plays an essential role in embryonic vascularization, tumor angiogenesis and pathophysiology of ischemic disease. Heterodimerizes with ARNT; heterodimer binds to core DNA sequence 5'-TACGTG-3' within the hypoxia response element (HRE) of target gene promoters. Activation requires recruitment of transcriptional coactivators such as CREBBP and EP300. Activity is enhanced by interaction with NCOA1 and/or NCOA2. Interaction with redox regulatory protein APEX1 seems to activate CTAD and potentiates activation by NCOA1 and CREBBP. Involved in the axonal distribution and transport of mitochondria in neurons during hypoxia. This Bos taurus (Bovine) protein is Hypoxia-inducible factor 1-alpha (HIF1A).